Consider the following 618-residue polypeptide: Grainyhead-like protein 1 homolog (618 aa).

The tract at residues 1 to 91 is transcription activation; the sequence is MTQEYDNKRP…EVEHPEPDHS (91 aa). A compositionally biased stretch (basic and acidic residues) spans 74–92; the sequence is RRSSTAKPEVEHPEPDHSK. A disordered region spans residues 74–94; the sequence is RRSSTAKPEVEHPEPDHSKRN. Phosphothreonine is present on Thr-208. A Grh/CP2 DB domain is found at 248 to 474; sequence SGNNFEYTLE…DLDTQPVLFI (227 aa). Interaction with DNA regions lie at residues 380–389 and 427–430; these read TDFSSQKGVK and RKIR.

Belongs to the grh/CP2 family. Grainyhead subfamily. In terms of assembly, binds DNA as homodimer. Homodimer, also forms heterodimers with GRHL2 or GRHL3. Post-translationally, methylation at Arg-9 and Lys-116 may be involved in regulating transcriptional activation. Isoform 1 is highly expressed in brain, pancreas, tonsil, placenta and kidney. Isoform 2 is highly expressed in brain and liver. Expressed at very low levels in non-steroidogenic cells.

It is found in the nucleus. In terms of biological role, transcription factor involved in epithelial development. Binds directly to the consensus DNA sequence 5'-AACCGGTT-3'. Important regulator of DSG1 in the context of hair anchorage and epidermal differentiation, participates in the maintenance of the skin barrier. There is no genetic interaction with GRHL3, nor functional cooperativity due to diverse target gene selectivity during epithelia development. May play a role in regulating glucose homeostasis and insulin signaling. Functions as a transcription activator. Functionally, may function as a repressor in tissues where both isoform 1 and isoform 2 are expressed. This chain is Grainyhead-like protein 1 homolog, found in Homo sapiens (Human).